The chain runs to 251 residues: Gamma-interferon-inducible lysosomal thiol reductase (251 aa).

Residues 1 to 21 (MFGFRLSVLLFAVCSLSACSC) form the signal peptide. Residues 22 to 60 (MFVNSCKYPPSQWCDSRDIAAQCGVLEQCMKFNASPVTV) form the Saposin A-type domain. A disulfide bridge links C68 with C71. N-linked (GlcNAc...) asparagine glycosylation occurs at N108.

The protein belongs to the GILT family. In terms of assembly, dimer; disulfide-linked. In terms of tissue distribution, highly expressed in spleen and kidney. Also detected at lower levels in liver, heart, brain, intestine and gill.

Its subcellular location is the secreted. It localises to the lysosome. Its function is as follows. Lysosomal thiol reductase that can reduce protein disulfide bonds. May facilitate the complete unfolding of proteins destined for lysosomal degradation. Plays an important role in antigen processing. The chain is Gamma-interferon-inducible lysosomal thiol reductase from Carassius auratus (Goldfish).